Consider the following 344-residue polypeptide: UDP-galactose/UDP-glucose transporter 5B (344 aa).

The next 8 membrane-spanning stretches (helical) occupy residues 16–36 (LWKGVFAVSGIMSTLVIYGVL), 56–76 (LFLVFCNRLTTSAVSAGALLA), 115–135 (VQTLAKCAKMIPVMVWGTLIM), 142–162 (FDYLVAFLVTLGCSVFILFPA), 176–196 (TVWGVSLMAGYLGFDGFTSTF), 220–240 (CVLSFTGLILQGHLLPAVDFV), 246–266 (CLLDIALLSTVATASQFFISY), and 292–312 (CIWFSHPLSWEQCIGSVIVFG). The tract at residues 324-344 (KNSQTQPPPPELPQYEKVESS) is disordered.

This sequence belongs to the nucleotide-sugar transporter family. UDP-galactose:UMP antiporter (TC 2.A.7.11) subfamily.

The protein localises to the membrane. Sugar transporter involved in the transport of nucleotide-sugars from cytoplasm into the Golgi and/or the endoplasmic reticulum. The polypeptide is UDP-galactose/UDP-glucose transporter 5B (Arabidopsis thaliana (Mouse-ear cress)).